A 155-amino-acid polypeptide reads, in one-letter code: Small ribosomal subunit protein uS7 (155 aa).

Belongs to the universal ribosomal protein uS7 family. In terms of assembly, part of the 30S ribosomal subunit. Contacts proteins S9 and S11.

Its function is as follows. One of the primary rRNA binding proteins, it binds directly to 16S rRNA where it nucleates assembly of the head domain of the 30S subunit. Is located at the subunit interface close to the decoding center, probably blocks exit of the E-site tRNA. The chain is Small ribosomal subunit protein uS7 from Pseudothermotoga lettingae (strain ATCC BAA-301 / DSM 14385 / NBRC 107922 / TMO) (Thermotoga lettingae).